Reading from the N-terminus, the 77-residue chain is Acyl carrier protein (77 aa).

A Carrier domain is found at S2–Q77. The residue at position 37 (S37) is an O-(pantetheine 4'-phosphoryl)serine.

This sequence belongs to the acyl carrier protein (ACP) family. In terms of processing, 4'-phosphopantetheine is transferred from CoA to a specific serine of apo-ACP by AcpS. This modification is essential for activity because fatty acids are bound in thioester linkage to the sulfhydryl of the prosthetic group.

Its subcellular location is the cytoplasm. It participates in lipid metabolism; fatty acid biosynthesis. In terms of biological role, carrier of the growing fatty acid chain in fatty acid biosynthesis. This Shewanella oneidensis (strain ATCC 700550 / JCM 31522 / CIP 106686 / LMG 19005 / NCIMB 14063 / MR-1) protein is Acyl carrier protein.